The chain runs to 314 residues: tRNA pseudouridine synthase B (314 aa).

The active-site Nucleophile is D47.

It belongs to the pseudouridine synthase TruB family. Type 1 subfamily.

The catalysed reaction is uridine(55) in tRNA = pseudouridine(55) in tRNA. Responsible for synthesis of pseudouridine from uracil-55 in the psi GC loop of transfer RNAs. The polypeptide is tRNA pseudouridine synthase B (Vibrio vulnificus (strain CMCP6)).